The primary structure comprises 127 residues: MSLLKEFKEFAMRGNVIDLAVAVVMGVAFNKIVTALVDGIIMPCVGLLLGGINIAGLSFTVGDAQIKWGSFLQNVIDFIIVAFAIFVLIKLINLLQRKKENEPEPVTPEIQLLTEIRDLLARNSSKI.

The next 3 helical transmembrane spans lie at 9–29 (EFAM…GVAF), 32–52 (IVTA…LGGI), and 75–95 (VIDF…INLL).

This sequence belongs to the MscL family. In terms of assembly, homopentamer.

Its subcellular location is the cell inner membrane. Channel that opens in response to stretch forces in the membrane lipid bilayer. May participate in the regulation of osmotic pressure changes within the cell. This chain is Large-conductance mechanosensitive channel, found in Legionella pneumophila (strain Paris).